Here is a 234-residue protein sequence, read N- to C-terminus: Proteasome subunit alpha type-2 (234 aa).

Ala2 bears the N-acetylalanine mark. Tyr121 is modified (phosphotyrosine).

It belongs to the peptidase T1A family. In terms of assembly, the 26S proteasome consists of a 20S proteasome core and two 19S regulatory subunits. The 20S proteasome core is a barrel-shaped complex made of 28 subunits that are arranged in four stacked rings. The two outer rings are each formed by seven alpha subunits, and the two inner rings are formed by seven beta subunits. The proteolytic activity is exerted by three beta-subunits PSMB5, PSMB6 and PSMB7.

It localises to the cytoplasm. It is found in the nucleus. Its function is as follows. Component of the 20S core proteasome complex involved in the proteolytic degradation of most intracellular proteins. This complex plays numerous essential roles within the cell by associating with different regulatory particles. Associated with two 19S regulatory particles, forms the 26S proteasome and thus participates in the ATP-dependent degradation of ubiquitinated proteins. The 26S proteasome plays a key role in the maintenance of protein homeostasis by removing misfolded or damaged proteins that could impair cellular functions, and by removing proteins whose functions are no longer required. Associated with the PA200 or PA28, the 20S proteasome mediates ubiquitin-independent protein degradation. This type of proteolysis is required in several pathways including spermatogenesis (20S-PA200 complex) or generation of a subset of MHC class I-presented antigenic peptides (20S-PA28 complex). This is Proteasome subunit alpha type-2 (psma2) from Xenopus laevis (African clawed frog).